The primary structure comprises 630 residues: FAST kinase domain-containing protein 4 (630 aa).

One can recognise an RAP domain in the interval 560 to 618 (IAFLRWEFPNFNSRSKDLLGRFVLARRHVLAAGFLVVDVPYYEWLDLKSEWQKSAYLKD).

This sequence belongs to the FAST kinase family. As to expression, expression detected in spleen, testis, colon, heart, smooth muscle, kidney, brain, lung, liver, brown and white adipose tissue with highest expression in testis, heart, smooth muscle and brown adipose tissue.

It is found in the mitochondrion matrix. Plays a role in processing of mitochondrial RNA precursors and in stabilization of a subset of mature mitochondrial RNA species, such as MT-CO1, MT-CO2, MT-CYB, MT-CO3, MT-ND3, MT-ND5 and MT-ATP8/6. May play a role in cell cycle progression. The chain is FAST kinase domain-containing protein 4 (Tbrg4) from Mus musculus (Mouse).